Reading from the N-terminus, the 234-residue chain is Leucyl/phenylalanyl-tRNA--protein transferase (234 aa).

Belongs to the L/F-transferase family.

The protein localises to the cytoplasm. It catalyses the reaction N-terminal L-lysyl-[protein] + L-leucyl-tRNA(Leu) = N-terminal L-leucyl-L-lysyl-[protein] + tRNA(Leu) + H(+). It carries out the reaction N-terminal L-arginyl-[protein] + L-leucyl-tRNA(Leu) = N-terminal L-leucyl-L-arginyl-[protein] + tRNA(Leu) + H(+). The enzyme catalyses L-phenylalanyl-tRNA(Phe) + an N-terminal L-alpha-aminoacyl-[protein] = an N-terminal L-phenylalanyl-L-alpha-aminoacyl-[protein] + tRNA(Phe). In terms of biological role, functions in the N-end rule pathway of protein degradation where it conjugates Leu, Phe and, less efficiently, Met from aminoacyl-tRNAs to the N-termini of proteins containing an N-terminal arginine or lysine. This chain is Leucyl/phenylalanyl-tRNA--protein transferase, found in Citrobacter koseri (strain ATCC BAA-895 / CDC 4225-83 / SGSC4696).